The sequence spans 446 residues: Probable D-serine dehydratase (446 aa).

At Lys-118 the chain carries N6-(pyridoxal phosphate)lysine.

The protein belongs to the serine/threonine dehydratase family. DsdA subfamily. Pyridoxal 5'-phosphate is required as a cofactor.

It catalyses the reaction D-serine = pyruvate + NH4(+). This Ectopseudomonas mendocina (strain ymp) (Pseudomonas mendocina) protein is Probable D-serine dehydratase.